A 130-amino-acid chain; its full sequence is Small ribosomal subunit protein uS11 (130 aa).

It belongs to the universal ribosomal protein uS11 family. As to quaternary structure, part of the 30S ribosomal subunit. Interacts with proteins S7 and S18. Binds to IF-3.

Its function is as follows. Located on the platform of the 30S subunit, it bridges several disparate RNA helices of the 16S rRNA. Forms part of the Shine-Dalgarno cleft in the 70S ribosome. The polypeptide is Small ribosomal subunit protein uS11 (Campylobacter jejuni subsp. jejuni serotype O:6 (strain 81116 / NCTC 11828)).